The sequence spans 65 residues: Toxin NaTx-22 (65 aa).

The LCN-type CS-alpha/beta domain maps to 1–64 (KDGYPVIKTT…TYPIPGKTCK (64 aa)). 4 disulfides stabilise this stretch: Cys12–Cys63, Cys16–Cys39, Cys25–Cys44, and Cys29–Cys46.

Belongs to the long (4 C-C) scorpion toxin superfamily. Sodium channel inhibitor family. In terms of tissue distribution, expressed by the venom gland.

The protein localises to the secreted. Probable sodium channel inhibitor. This is Toxin NaTx-22 from Centruroides sculpturatus (Arizona bark scorpion).